A 233-amino-acid polypeptide reads, in one-letter code: METTEGKNDLRAKLAEKIQTFRSQRKATEKVDRALLLQRRKEKAKARAEAKKLAKKESKAKQESKVAAYDTGNSSDNIADEENDNHKSTITYGTLIVGDDKFSNGKLKVAGKKRGPTDVFGALKHLEAKKRRIESMDEEKRRKIEESDKWHRVLLQAEGKKLKDNEQLLKKSIRRKEKEKKKSSDAWKERKDNEKKAMLMRQQRREENLKKRRESKKSKKGKAPKKKKPSKKK.

Residues 32-65 (DRALLLQRRKEKAKARAEAKKLAKKESKAKQESK) are a coiled coil. Positions 47 to 64 (RAEAKKLAKKESKAKQES) are enriched in basic and acidic residues. 3 disordered regions span residues 47–87 (RAEA…DNHK), 130–149 (KRRI…ESDK), and 164–233 (DNEQ…SKKK). S75 is modified (phosphoserine). Residues 122–223 (ALKHLEAKKR…ESKKSKKGKA (102 aa)) are a coiled coil. Basic and acidic residues-rich tracts occupy residues 133–149 (IESM…ESDK) and 180–209 (KKKS…EENL). Residues 210-233 (KKRRESKKSKKGKAPKKKKPSKKK) show a composition bias toward basic residues.

The protein belongs to the SURF6 family. In terms of assembly, component of the 90S and 60S pre-ribosomal particles.

It localises to the nucleus. The protein resides in the nucleolus. Involved in ribosome biogenesis and cell polarity. Required for the synthesis of both 40S and 60S ribosomal subunits and may also play some direct role in correct positioning of the mitotic spindle during mitosis. The chain is Ribosomal RNA-processing protein 14-C (rrp14c) from Schizosaccharomyces pombe (strain 972 / ATCC 24843) (Fission yeast).